The chain runs to 370 residues: G-protein coupled receptor homolog K2 (370 aa).

Residues 1–61 (MTSPTNSTML…CTFLEDTKYH (61 aa)) are Extracellular-facing. N-linked (GlcNAc...) asparagine; by host glycosylation is found at Asn-6 and Asn-51. The helical transmembrane segment at 62 to 82 (IIVIHIILFLLGSIGNIFVVS) threads the bilayer. The Cytoplasmic segment spans residues 83-94 (LIAFKRNKSITD). A helical membrane pass occupies residues 95–115 (IYILNLSMSDCIFVFQIPFIV). Topologically, residues 116 to 131 (YSKLDQWIFGNILCKI) are extracellular. Residues 132–152 (MSVLYYVGFFSNMFIITLMSI) form a helical membrane-spanning segment. Residues 153-171 (DRYFAIVHPIKRQPYRTKR) are Cytoplasmic-facing. A helical membrane pass occupies residues 172-192 (IGILMCCSAWLLSLILSSPVS). Residues 193-223 (KLYENIPHMSKDIYQCTLTNENDSIIAFIKR) are Extracellular-facing. A helical transmembrane segment spans residues 224 to 244 (LMQIEITILGFLIPIIIFVYC). Residues 245 to 265 (YYRIFTTVVRLRNRRKYKSIK) lie on the Cytoplasmic side of the membrane. Residues 266–286 (IVLMIVVCSLICWIPLYIVLM) traverse the membrane as a helical segment. The Extracellular segment spans residues 287-300 (IATIVSLYTSNIFR). The helical transmembrane segment at 301 to 321 (HLCLYLNLAYAITFSETISLA) threads the bilayer. The Cytoplasmic segment spans residues 322–370 (RCCINPIIYTLIGEHVRSRISSICSCIYRDNRIRKKLFSRKSSSSSNII).

This sequence belongs to the G-protein coupled receptor 1 family.

Its subcellular location is the host cell membrane. Functionally, putative chemokine receptor. This chain is G-protein coupled receptor homolog K2, found in Sus scrofa (Pig).